Reading from the N-terminus, the 396-residue chain is Tryptophan synthase beta chain (396 aa).

Residue lysine 88 is modified to N6-(pyridoxal phosphate)lysine.

It belongs to the TrpB family. Tetramer of two alpha and two beta chains. It depends on pyridoxal 5'-phosphate as a cofactor.

The catalysed reaction is (1S,2R)-1-C-(indol-3-yl)glycerol 3-phosphate + L-serine = D-glyceraldehyde 3-phosphate + L-tryptophan + H2O. Its pathway is amino-acid biosynthesis; L-tryptophan biosynthesis; L-tryptophan from chorismate: step 5/5. The beta subunit is responsible for the synthesis of L-tryptophan from indole and L-serine. This Shewanella baltica (strain OS155 / ATCC BAA-1091) protein is Tryptophan synthase beta chain.